Reading from the N-terminus, the 134-residue chain is CDGSH iron-sulfur domain-containing protein 2 homolog (134 aa).

The Lumenal portion of the chain corresponds to 1–35 (MESLSHLVKSTLPNYLSNLPVPDTLGGWFKLSFKD). A helical membrane pass occupies residues 36–58 (WLALIPPTVVVAGIGYTGYLAFC). Residues 59–134 (PAAQDRCSAK…DNVGPVVVKK (76 aa)) are Cytoplasmic-facing. C101, C103, C112, and H116 together coordinate [2Fe-2S] cluster.

This sequence belongs to the CISD protein family. CISD2 subfamily. Requires [2Fe-2S] cluster as cofactor.

It is found in the endoplasmic reticulum membrane. The protein is CDGSH iron-sulfur domain-containing protein 2 homolog of Drosophila willistoni (Fruit fly).